The sequence spans 688 residues: Glycine--tRNA ligase beta subunit (688 aa).

This sequence belongs to the class-II aminoacyl-tRNA synthetase family. In terms of assembly, tetramer of two alpha and two beta subunits.

It localises to the cytoplasm. It catalyses the reaction tRNA(Gly) + glycine + ATP = glycyl-tRNA(Gly) + AMP + diphosphate. In Shewanella sp. (strain MR-4), this protein is Glycine--tRNA ligase beta subunit.